We begin with the raw amino-acid sequence, 589 residues long: Probable methyltransferase PMT23 (589 aa).

Topologically, residues 1–4 (MAIS) are cytoplasmic. A helical; Signal-anchor for type II membrane protein transmembrane segment spans residues 5-25 (VQHVVVLLLSTLLIAITFFLF). At 26 to 589 (TSDNARFPFP…FWRPAKPELR (564 aa)) the chain is on the lumenal side. N-linked (GlcNAc...) asparagine glycosylation is found at N70, N375, and N442.

This sequence belongs to the methyltransferase superfamily.

Its subcellular location is the golgi apparatus membrane. In Arabidopsis thaliana (Mouse-ear cress), this protein is Probable methyltransferase PMT23.